A 176-amino-acid polypeptide reads, in one-letter code: NAD(P)H-quinone oxidoreductase subunit 6, chloroplastic (176 aa).

A run of 5 helical transmembrane segments spans residues 10–30 (FLLV…VLFT), 32–52 (PIFS…LYIL), 61–81 (AQLL…VMFM), 95–115 (VGDG…ISTI), and 152–172 (FFLP…GAIS).

The protein belongs to the complex I subunit 6 family. In terms of assembly, NDH is composed of at least 16 different subunits, 5 of which are encoded in the nucleus.

It is found in the plastid. The protein localises to the chloroplast thylakoid membrane. It catalyses the reaction a plastoquinone + NADH + (n+1) H(+)(in) = a plastoquinol + NAD(+) + n H(+)(out). The catalysed reaction is a plastoquinone + NADPH + (n+1) H(+)(in) = a plastoquinol + NADP(+) + n H(+)(out). Functionally, NDH shuttles electrons from NAD(P)H:plastoquinone, via FMN and iron-sulfur (Fe-S) centers, to quinones in the photosynthetic chain and possibly in a chloroplast respiratory chain. The immediate electron acceptor for the enzyme in this species is believed to be plastoquinone. Couples the redox reaction to proton translocation, and thus conserves the redox energy in a proton gradient. This is NAD(P)H-quinone oxidoreductase subunit 6, chloroplastic (ndhG) from Aethionema grandiflorum (Persian stone-cress).